Consider the following 111-residue polypeptide: Large ribosomal subunit protein uL23 (111 aa).

This sequence belongs to the universal ribosomal protein uL23 family. As to quaternary structure, part of the 50S ribosomal subunit. Contacts protein L29, and trigger factor when it is bound to the ribosome.

Its function is as follows. One of the early assembly proteins it binds 23S rRNA. One of the proteins that surrounds the polypeptide exit tunnel on the outside of the ribosome. Forms the main docking site for trigger factor binding to the ribosome. This Chlamydia trachomatis serovar A (strain ATCC VR-571B / DSM 19440 / HAR-13) protein is Large ribosomal subunit protein uL23.